Reading from the N-terminus, the 515-residue chain is Serine/threonine-protein phosphatase PP-Z (515 aa).

The tract at residues 1 to 186 (MGQGSSKHAD…SSTDPDDPET (186 aa)) is disordered. The span at 17–30 (PSFSRSDTQGSIKS) shows a compositional bias: polar residues. Ser18 is modified (phosphoserine). The segment covering 40–51 (KGKDSNHDRRTS) has biased composition (basic and acidic residues). Residues 63–74 (ETPPSLPPPPSP) are compositionally biased toward pro residues. Over residues 91-109 (DSGNSSQSPTSPHPSNQPA) the composition is skewed to polar residues. Low complexity predominate over residues 126 to 143 (SSSSYAVSPTSPTSPTSS). Residues Asp248, His250, Asp276, and Asn308 each contribute to the Mn(2+) site. His309 (proton donor) is an active-site residue. The Mn(2+) site is built by His357 and His432. 2 positions are modified to phosphoserine: Ser505 and Ser514.

This sequence belongs to the PPP phosphatase family. PP-Z subfamily. It depends on Mn(2+) as a cofactor.

The protein localises to the cytoplasm. It carries out the reaction O-phospho-L-seryl-[protein] + H2O = L-seryl-[protein] + phosphate. It catalyses the reaction O-phospho-L-threonyl-[protein] + H2O = L-threonyl-[protein] + phosphate. The protein is Serine/threonine-protein phosphatase PP-Z (pzh1) of Schizosaccharomyces pombe (strain 972 / ATCC 24843) (Fission yeast).